We begin with the raw amino-acid sequence, 857 residues long: DNA mismatch repair protein MutS (857 aa).

ATP is bound at residue G608–S615.

Belongs to the DNA mismatch repair MutS family.

In terms of biological role, this protein is involved in the repair of mismatches in DNA. It is possible that it carries out the mismatch recognition step. This protein has a weak ATPase activity. In Lactobacillus johnsonii (strain CNCM I-12250 / La1 / NCC 533), this protein is DNA mismatch repair protein MutS.